Here is a 360-residue protein sequence, read N- to C-terminus: Lipid-A-disaccharide synthase (360 aa).

The protein belongs to the LpxB family.

The enzyme catalyses a lipid X + a UDP-2-N,3-O-bis[(3R)-3-hydroxyacyl]-alpha-D-glucosamine = a lipid A disaccharide + UDP + H(+). Its pathway is bacterial outer membrane biogenesis; LPS lipid A biosynthesis. Its function is as follows. Condensation of UDP-2,3-diacylglucosamine and 2,3-diacylglucosamine-1-phosphate to form lipid A disaccharide, a precursor of lipid A, a phosphorylated glycolipid that anchors the lipopolysaccharide to the outer membrane of the cell. The polypeptide is Lipid-A-disaccharide synthase (Helicobacter pylori (strain HPAG1)).